The chain runs to 500 residues: NAD(P)H-quinone oxidoreductase chain 4, chloroplastic (500 aa).

A run of 15 helical transmembrane segments spans residues 4–24 (FPWLTIIVVFPISAGSLMLFL), 35–55 (YTICICILELLLTTYAFCYNF), 87–107 (IGTILLTGFITTLATLAAFPV), 113–130 (LFHFLMLAMYSGQIGSFS), 134–154 (LLLFFIMWELELIPVYLLLAM), 167–187 (FILYTAGSSIFLLIGVLGISL), 211–231 (ILFYIGFLIAFAVKSPIIPLH), 242–262 (HYSTCMLLAGILLKMGAYGLV), 272–292 (AHSMFSPWLMVVGTIQIIYAA), 305–325 (IAYSSVSHMGFIIIGISSITD), 330–350 (GAILQIISHGFIGAALFFLAG), 364–384 (MGGMAISIPKIFTMFTILSMA), 386–406 (LALPGMSGFIAELIVFFGIIT), 411–431 (FLIFKILIIFVMAIGMILTPI), and 462–482 (LFLSISILIPIIGIGIYPDFV).

It belongs to the complex I subunit 4 family.

Its subcellular location is the plastid. It localises to the chloroplast thylakoid membrane. The enzyme catalyses a plastoquinone + NADH + (n+1) H(+)(in) = a plastoquinol + NAD(+) + n H(+)(out). It carries out the reaction a plastoquinone + NADPH + (n+1) H(+)(in) = a plastoquinol + NADP(+) + n H(+)(out). The polypeptide is NAD(P)H-quinone oxidoreductase chain 4, chloroplastic (Capsella bursa-pastoris (Shepherd's purse)).